Reading from the N-terminus, the 416-residue chain is cAMP-dependent protein kinase type II-beta regulatory subunit (416 aa).

The dimerization and phosphorylation stretch occupies residues S2 to L151. A disordered region spans residues H53–G97. Position 69 is a phosphothreonine (T69). A phosphoserine mark is found at S83, S85, and S112. 3',5'-cyclic AMP-binding positions include L152–P273, E221, R230, F274–A416, E350, and R359.

This sequence belongs to the cAMP-dependent kinase regulatory chain family. The inactive form of the enzyme is composed of two regulatory chains and two catalytic chains. Activation by cAMP produces two active catalytic monomers and a regulatory dimer that binds four cAMP molecules. Interacts with PRKACA and PRKACB. Interacts with the phosphorylated form of PJA2. Forms a complex composed of PRKAR2B, GSK3B and GSKIP through GSKIP interaction; facilitates PKA-induced phosphorylation and regulates GSK3B activity. In terms of processing, phosphorylated by the activated catalytic chain. Four types of regulatory chains are found: I-alpha, I-beta, II-alpha, and II-beta. Their expression varies among tissues and is in some cases constitutive and in others inducible. Brain. Present in a few pyramidal neurons and mostly in mossy fibers. Colocalizes with PJA2 in dentate granule cells and at postsynaptic sites of primary hippocampal neurons.

It is found in the cytoplasm. It localises to the cell membrane. In terms of biological role, regulatory subunit of the cAMP-dependent protein kinases involved in cAMP signaling in cells. Type II regulatory chains mediate membrane association by binding to anchoring proteins, including the MAP2 kinase. This chain is cAMP-dependent protein kinase type II-beta regulatory subunit (Prkar2b), found in Rattus norvegicus (Rat).